The primary structure comprises 80 residues: Defensin-like protein 1 (80 aa).

Positions 1–29 are cleaved as a signal peptide; it reads MAKFASIIALLFAALVLFAAFEAPTMVEA. A Pyrrolidone carboxylic acid modification is found at glutamine 30. 4 disulfides stabilise this stretch: cysteine 33-cysteine 80, cysteine 44-cysteine 65, cysteine 50-cysteine 74, and cysteine 54-cysteine 76.

Belongs to the DEFL family. In terms of assembly, forms oligomers in its native state.

The protein resides in the secreted. Functionally, possesses antifungal activity sensitive to inorganic cations. The protein is Defensin-like protein 1 (AFP1) of Raphanus sativus (Radish).